Consider the following 365-residue polypeptide: Alanine racemase (365 aa).

Lys-35 acts as the Proton acceptor; specific for D-alanine in catalysis. N6-(pyridoxal phosphate)lysine is present on Lys-35. Arg-130 provides a ligand contact to substrate. The active-site Proton acceptor; specific for L-alanine is Tyr-256. Met-304 is a binding site for substrate.

The protein belongs to the alanine racemase family. Pyridoxal 5'-phosphate is required as a cofactor.

It catalyses the reaction L-alanine = D-alanine. Its pathway is amino-acid biosynthesis; D-alanine biosynthesis; D-alanine from L-alanine: step 1/1. Functionally, catalyzes the interconversion of L-alanine and D-alanine. May also act on other amino acids. The sequence is that of Alanine racemase (alr) from Polaromonas naphthalenivorans (strain CJ2).